The sequence spans 448 residues: Exodeoxyribonuclease 7 large subunit (448 aa).

The protein belongs to the XseA family. In terms of assembly, heterooligomer composed of large and small subunits.

Its subcellular location is the cytoplasm. The catalysed reaction is Exonucleolytic cleavage in either 5'- to 3'- or 3'- to 5'-direction to yield nucleoside 5'-phosphates.. Its function is as follows. Bidirectionally degrades single-stranded DNA into large acid-insoluble oligonucleotides, which are then degraded further into small acid-soluble oligonucleotides. The polypeptide is Exodeoxyribonuclease 7 large subunit (Histophilus somni (strain 129Pt) (Haemophilus somnus)).